The sequence spans 352 residues: Trifunctional sesterterpene/triterpene/sesquarterpene synthase (352 aa).

Belongs to the large terpene synthase family.

It catalyses the reaction (2E,6E,10E,14E)-geranylfarnesyl diphosphate = beta-geranylfarnesene + diphosphate. The enzyme catalyses all-trans-hexaprenyl diphosphate = beta-hexaprene + diphosphate. It carries out the reaction all-trans-heptaprenyl diphosphate = beta-heptaprene + diphosphate. In terms of biological role, catalyzes the conversion of geranylfarnesyl diphosphate (GFPP) and hexaprenyl diphosphate (HexPP) into beta-geranylfarnesene and beta-hexaprene, respectively. Also produces beta-heptaprene from heptaprenyl diphosphate (HepPP) as a minor product. This chain is Trifunctional sesterterpene/triterpene/sesquarterpene synthase, found in Shouchella clausii (Alkalihalobacillus clausii).